The following is a 372-amino-acid chain: DSC E3 ubiquitin ligase complex subunit 2 (372 aa).

The next 5 helical transmembrane spans lie at Val-26–Leu-46, Ile-54–Ile-74, Tyr-95–Phe-115, Thr-126–Val-146, and Val-160–Leu-180. A disordered region spans residues Thr-246–Tyr-314. The segment covering Glu-249–Gln-268 has biased composition (polar residues). Ser-264 bears the Phosphoserine mark. Thr-266 is subject to Phosphothreonine. The segment covering Asn-269–Ser-284 has biased composition (low complexity). The span at Arg-286–Leu-305 shows a compositional bias: polar residues. In terms of domain architecture, UBA spans Glu-332–Gln-368.

As to quaternary structure, component of the DSC E3 ubiquitin ligase complex composed of dsc1, dsc2, dsc3 and dsc4.

It localises to the golgi apparatus membrane. It carries out the reaction S-ubiquitinyl-[E2 ubiquitin-conjugating enzyme]-L-cysteine + [acceptor protein]-L-lysine = [E2 ubiquitin-conjugating enzyme]-L-cysteine + N(6)-ubiquitinyl-[acceptor protein]-L-lysine.. The protein operates within protein modification; protein ubiquitination. Functionally, component of the DSC E3 ubiquitin ligase complex which is required for the sre1 transcriptional activator proteolytic cleavage to release the soluble transcription factor from the membrane in low oxygen or sterol conditions. The complex also plays an important role in the multivesicular body (MVB) pathway and functions in a post-endoplasmic reticulum pathway for protein degradation. This chain is DSC E3 ubiquitin ligase complex subunit 2 (dsc2), found in Schizosaccharomyces pombe (strain 972 / ATCC 24843) (Fission yeast).